A 207-amino-acid chain; its full sequence is Dephospho-CoA kinase (207 aa).

Over residues 1–11 (MTRSPAPSSPT) the composition is skewed to polar residues. The disordered stretch occupies residues 1 to 21 (MTRSPAPSSPTHPRRLGLTGS). In terms of domain architecture, DPCK spans 15-207 (RLGLTGSIGA…DAALRQLEIT (193 aa)). 23-28 (GAGKST) lines the ATP pocket.

It belongs to the CoaE family.

It localises to the cytoplasm. It catalyses the reaction 3'-dephospho-CoA + ATP = ADP + CoA + H(+). It participates in cofactor biosynthesis; coenzyme A biosynthesis; CoA from (R)-pantothenate: step 5/5. Functionally, catalyzes the phosphorylation of the 3'-hydroxyl group of dephosphocoenzyme A to form coenzyme A. The chain is Dephospho-CoA kinase from Deinococcus radiodurans (strain ATCC 13939 / DSM 20539 / JCM 16871 / CCUG 27074 / LMG 4051 / NBRC 15346 / NCIMB 9279 / VKM B-1422 / R1).